Reading from the N-terminus, the 220-residue chain is Ribosomal RNA large subunit methyltransferase E (220 aa).

S-adenosyl-L-methionine contacts are provided by Gly-64, Trp-66, Asp-84, Asp-100, and Asp-125. Lys-165 acts as the Proton acceptor in catalysis.

This sequence belongs to the class I-like SAM-binding methyltransferase superfamily. RNA methyltransferase RlmE family.

Its subcellular location is the cytoplasm. The enzyme catalyses uridine(2552) in 23S rRNA + S-adenosyl-L-methionine = 2'-O-methyluridine(2552) in 23S rRNA + S-adenosyl-L-homocysteine + H(+). Its function is as follows. Specifically methylates the uridine in position 2552 of 23S rRNA at the 2'-O position of the ribose in the fully assembled 50S ribosomal subunit. This Thiobacillus denitrificans (strain ATCC 25259 / T1) protein is Ribosomal RNA large subunit methyltransferase E.